The primary structure comprises 465 residues: Glutamate--tRNA ligase 1 (465 aa).

Positions 8-18 match the 'HIGH' region motif; that stretch reads PSPTGNLHIGG. A 'KMSKS' region motif is present at residues 236-240; it reads KLSKR. Residue Lys-239 coordinates ATP.

It belongs to the class-I aminoacyl-tRNA synthetase family. Glutamate--tRNA ligase type 1 subfamily. Monomer.

It is found in the cytoplasm. It catalyses the reaction tRNA(Glu) + L-glutamate + ATP = L-glutamyl-tRNA(Glu) + AMP + diphosphate. Its function is as follows. Catalyzes the attachment of glutamate to tRNA(Glu) in a two-step reaction: glutamate is first activated by ATP to form Glu-AMP and then transferred to the acceptor end of tRNA(Glu). The sequence is that of Glutamate--tRNA ligase 1 from Wolinella succinogenes (strain ATCC 29543 / DSM 1740 / CCUG 13145 / JCM 31913 / LMG 7466 / NCTC 11488 / FDC 602W) (Vibrio succinogenes).